Here is a 269-residue protein sequence, read N- to C-terminus: Tryptophan synthase alpha chain (269 aa).

Residues Glu-49 and Asp-60 each act as proton acceptor in the active site.

This sequence belongs to the TrpA family. As to quaternary structure, tetramer of two alpha and two beta chains.

The catalysed reaction is (1S,2R)-1-C-(indol-3-yl)glycerol 3-phosphate + L-serine = D-glyceraldehyde 3-phosphate + L-tryptophan + H2O. The protein operates within amino-acid biosynthesis; L-tryptophan biosynthesis; L-tryptophan from chorismate: step 5/5. The alpha subunit is responsible for the aldol cleavage of indoleglycerol phosphate to indole and glyceraldehyde 3-phosphate. This is Tryptophan synthase alpha chain from Azotobacter vinelandii (strain DJ / ATCC BAA-1303).